Here is a 425-residue protein sequence, read N- to C-terminus: tRNA(Met) cytidine acetate ligase (425 aa).

Residues 7-20 (IVEYNPFHNGHLYH), G102, N165, and 190-191 (RI) contribute to the ATP site.

The protein belongs to the TmcAL family.

It localises to the cytoplasm. It carries out the reaction cytidine(34) in elongator tRNA(Met) + acetate + ATP = N(4)-acetylcytidine(34) in elongator tRNA(Met) + AMP + diphosphate. Functionally, catalyzes the formation of N(4)-acetylcytidine (ac(4)C) at the wobble position of elongator tRNA(Met), using acetate and ATP as substrates. First activates an acetate ion to form acetyladenylate (Ac-AMP) and then transfers the acetyl group to tRNA to form ac(4)C34. The polypeptide is tRNA(Met) cytidine acetate ligase (Thermosipho melanesiensis (strain DSM 12029 / CIP 104789 / BI429)).